A 298-amino-acid chain; its full sequence is N-acetylmuramic acid 6-phosphate etherase (298 aa).

Residues 55 to 218 (IHAQVSGGGR…STGLMIKSGK (164 aa)) enclose the SIS domain. Glu-83 serves as the catalytic Proton donor. Glu-114 is a catalytic residue.

Belongs to the GCKR-like family. MurNAc-6-P etherase subfamily. Homodimer.

The catalysed reaction is N-acetyl-D-muramate 6-phosphate + H2O = N-acetyl-D-glucosamine 6-phosphate + (R)-lactate. It participates in amino-sugar metabolism; 1,6-anhydro-N-acetylmuramate degradation. The protein operates within amino-sugar metabolism; N-acetylmuramate degradation. It functions in the pathway cell wall biogenesis; peptidoglycan recycling. Functionally, specifically catalyzes the cleavage of the D-lactyl ether substituent of MurNAc 6-phosphate, producing GlcNAc 6-phosphate and D-lactate. Together with AnmK, is also required for the utilization of anhydro-N-acetylmuramic acid (anhMurNAc) either imported from the medium or derived from its own cell wall murein, and thus plays a role in cell wall recycling. In Shigella flexneri, this protein is N-acetylmuramic acid 6-phosphate etherase.